The sequence spans 259 residues: Dihydroorotate dehydrogenase B (NAD(+)), electron transfer subunit (259 aa).

The FAD-binding FR-type domain occupies 2 to 102 (MQKQNMIVVN…LGPLGHGFPV (101 aa)). Residues 53 to 56 (RPIS), 70 to 72 (LYR), and 77 to 78 (GT) each bind FAD. Positions 221, 226, 229, and 246 each coordinate [2Fe-2S] cluster.

Belongs to the PyrK family. In terms of assembly, heterotetramer of 2 PyrK and 2 PyrD type B subunits. It depends on [2Fe-2S] cluster as a cofactor. The cofactor is FAD.

Its pathway is pyrimidine metabolism; UMP biosynthesis via de novo pathway; orotate from (S)-dihydroorotate (NAD(+) route): step 1/1. In terms of biological role, responsible for channeling the electrons from the oxidation of dihydroorotate from the FMN redox center in the PyrD type B subunit to the ultimate electron acceptor NAD(+). The sequence is that of Dihydroorotate dehydrogenase B (NAD(+)), electron transfer subunit from Bacillus cereus (strain G9842).